Consider the following 94-residue polypeptide: Signal peptidase complex subunit 1 (94 aa).

Ser2 bears the N-acetylserine mark. Topologically, residues 2–28 (SEILQDVQRKLVFPIDFPSQRKTEKFQ) are cytoplasmic. A helical membrane pass occupies residues 29 to 49 (QLSLMIGALVACILGFAQQSL). A topological domain (lumenal) is located at residue Lys50. A helical membrane pass occupies residues 51–71 (VLLTAYGISCVITLICVLPAY). Over 72 to 94 (PWYNKQKLRWAQPKIEINVDQYD) the chain is Cytoplasmic.

It belongs to the SPCS1 family. As to quaternary structure, component of the signal peptidase complex (SPC) composed of a catalytic subunit SEC11 and three accessory subunits SPC1, SPC2 and SPC3. The complex induces a local thinning of the ER membrane which is used to measure the length of the signal peptide (SP) h-region of protein substrates. This ensures the selectivity of the complex towards h-regions shorter than 18-20 amino acids. SPC associates with the translocon complex. Interacts with SBH1 and SEB2/SBH2.

It is found in the endoplasmic reticulum membrane. Functionally, component of the signal peptidase complex (SPC) which catalyzes the cleavage of N-terminal signal sequences from nascent proteins as they are translocated into the lumen of the endoplasmic reticulum. Dispensable for SPC enzymatic activity. In Saccharomyces cerevisiae (strain ATCC 204508 / S288c) (Baker's yeast), this protein is Signal peptidase complex subunit 1 (SPC1).